A 434-amino-acid chain; its full sequence is Enolase (434 aa).

Gln163 is a binding site for (2R)-2-phosphoglycerate. Glu205 serves as the catalytic Proton donor. Mg(2+) is bound by residues Asp243, Glu291, and Asp318. (2R)-2-phosphoglycerate-binding residues include Lys343, Arg372, Ser373, and Lys394. Lys343 (proton acceptor) is an active-site residue.

This sequence belongs to the enolase family. It depends on Mg(2+) as a cofactor.

The protein localises to the cytoplasm. Its subcellular location is the secreted. It localises to the cell surface. The enzyme catalyses (2R)-2-phosphoglycerate = phosphoenolpyruvate + H2O. It participates in carbohydrate degradation; glycolysis; pyruvate from D-glyceraldehyde 3-phosphate: step 4/5. Catalyzes the reversible conversion of 2-phosphoglycerate (2-PG) into phosphoenolpyruvate (PEP). It is essential for the degradation of carbohydrates via glycolysis. This Fusobacterium nucleatum subsp. nucleatum (strain ATCC 25586 / DSM 15643 / BCRC 10681 / CIP 101130 / JCM 8532 / KCTC 2640 / LMG 13131 / VPI 4355) protein is Enolase.